The primary structure comprises 306 residues: Agmatinase (306 aa).

Mn(2+) contacts are provided by histidine 126, aspartate 149, histidine 151, aspartate 153, aspartate 230, and aspartate 232.

It belongs to the arginase family. Agmatinase subfamily. Mn(2+) serves as cofactor.

It catalyses the reaction agmatine + H2O = urea + putrescine. It participates in amine and polyamine biosynthesis; putrescine biosynthesis via agmatine pathway; putrescine from agmatine: step 1/1. Catalyzes the formation of putrescine from agmatine. In Escherichia coli O9:H4 (strain HS), this protein is Agmatinase.